The sequence spans 113 residues: Guanylate cyclase activator 2B (113 aa).

The signal sequence occupies residues 1 to 27; it reads MASRAAAGLLLCGVALVFLVLLQGTQS. A propeptide spanning residues 28 to 97 is cleaved from the precursor; the sequence is VYIQYQGFRV…SIFQALRTIA (70 aa). Cystine bridges form between Cys-68-Cys-81, Cys-101-Cys-109, and Cys-104-Cys-112.

This sequence belongs to the guanylin family.

The protein resides in the secreted. Endogenous activator of intestinal guanylate cyclase. It stimulates this enzyme through the same receptor binding region as the heat-stable enterotoxins. May be a potent physiological regulator of intestinal fluid and electrolyte transport. May be an autocrine/paracrine regulator of intestinal salt and water transport. The chain is Guanylate cyclase activator 2B (GUCA2B) from Sus scrofa (Pig).